A 150-amino-acid chain; its full sequence is Large ribosomal subunit protein uL13 (150 aa).

The segment at 130–150 is disordered; the sequence is EHPHSAQNPQVLSITTNELVK. Over residues 134 to 150 the composition is skewed to polar residues; it reads SAQNPQVLSITTNELVK.

The protein belongs to the universal ribosomal protein uL13 family. In terms of assembly, part of the 50S ribosomal subunit.

This protein is one of the early assembly proteins of the 50S ribosomal subunit, although it is not seen to bind rRNA by itself. It is important during the early stages of 50S assembly. This Prochlorococcus marinus (strain SARG / CCMP1375 / SS120) protein is Large ribosomal subunit protein uL13.